Here is a 124-residue protein sequence, read N- to C-terminus: S-adenosylmethionine decarboxylase proenzyme (124 aa).

Residue Ser-63 is the Schiff-base intermediate with substrate; via pyruvic acid of the active site. Ser-63 is subject to Pyruvic acid (Ser); by autocatalysis. The Proton acceptor; for processing activity role is filled by His-68. Catalysis depends on Cys-83, which acts as the Proton donor; for catalytic activity.

This sequence belongs to the prokaryotic AdoMetDC family. Type 1 subfamily. In terms of assembly, heterotetramer of two alpha and two beta chains arranged as a dimer of alpha/beta heterodimers. It depends on pyruvate as a cofactor. In terms of processing, is synthesized initially as an inactive proenzyme. Formation of the active enzyme involves a self-maturation process in which the active site pyruvoyl group is generated from an internal serine residue via an autocatalytic post-translational modification. Two non-identical subunits are generated from the proenzyme in this reaction, and the pyruvate is formed at the N-terminus of the alpha chain, which is derived from the carboxyl end of the proenzyme. The post-translation cleavage follows an unusual pathway, termed non-hydrolytic serinolysis, in which the side chain hydroxyl group of the serine supplies its oxygen atom to form the C-terminus of the beta chain, while the remainder of the serine residue undergoes an oxidative deamination to produce ammonia and the pyruvoyl group blocking the N-terminus of the alpha chain.

The catalysed reaction is S-adenosyl-L-methionine + H(+) = S-adenosyl 3-(methylsulfanyl)propylamine + CO2. It functions in the pathway amine and polyamine biosynthesis; S-adenosylmethioninamine biosynthesis; S-adenosylmethioninamine from S-adenosyl-L-methionine: step 1/1. In terms of biological role, catalyzes the decarboxylation of S-adenosylmethionine to S-adenosylmethioninamine (dcAdoMet), the propylamine donor required for the synthesis of the polyamines spermine and spermidine from the diamine putrescine. This chain is S-adenosylmethionine decarboxylase proenzyme, found in Thermoanaerobacter pseudethanolicus (strain ATCC 33223 / 39E) (Clostridium thermohydrosulfuricum).